We begin with the raw amino-acid sequence, 168 residues long: Cyanate hydratase (168 aa).

Active-site residues include Arg-91, Glu-94, and Ser-117.

The protein belongs to the cyanase family.

It catalyses the reaction cyanate + hydrogencarbonate + 3 H(+) = NH4(+) + 2 CO2. Its function is as follows. Catalyzes the reaction of cyanate with bicarbonate to produce ammonia and carbon dioxide. This Arabidopsis thaliana (Mouse-ear cress) protein is Cyanate hydratase.